The primary structure comprises 243 residues: R-spondin-2 (243 aa).

A signal peptide spans M1–C21. Cystine bridges form between C40/C46, C43/C52, C55/C74, C78/C93, C96/C104, C101/C110, C113/C124, C128/C141, C145/C187, C156/C163, and C196/C203. The FU repeat unit spans residues M90–P134. The TSP type-1 domain maps to G144–P204. An N-linked (GlcNAc...) asparagine glycan is attached at N160. The segment at H202–Q243 is disordered. A compositionally biased stretch (basic residues) spans T209–L224.

The protein belongs to the R-spondin family. As to quaternary structure, binds heparin.

It is found in the secreted. Functionally, activator of the canonical Wnt signaling pathway by acting as a ligand for lgr4-6 receptors. Upon binding to lgr4-6 (lgr4, lgr5 or lgr6), lgr4-6 associate with phosphorylated lrp6 and frizzled receptors that are activated by extracellular Wnt receptors, triggering the canonical Wnt signaling pathway to increase expression of target genes. Acts both in the canonical. Wnt/beta-catenin-dependent pathway and in non-canonical Wnt signaling pathway. Activates neural markers and promotes muscle formation. Overexpression blocks activin, nodal and BMP4 signaling, suggesting that it may negatively regulate the TGF-beta pathway. During embryonic development, plays a crucial role in limb specification, amplifying the Wnt signaling pathway independently of LGR4-6 receptors, possibly by acting as a direct antagonistic ligand to RNF43 and ZNRF3, hence governing the number of limbs an embryo should form. The chain is R-spondin-2 (rspo2) from Xenopus tropicalis (Western clawed frog).